The following is a 269-amino-acid chain: uncharacterized protein (269 aa).

ATP contacts are provided by residues 12–19 and 130–137; these read GKGGTGKS and GYLIVGKS.

It to M.jannaschii MJ0578.

This is an uncharacterized protein from Methanocaldococcus jannaschii (strain ATCC 43067 / DSM 2661 / JAL-1 / JCM 10045 / NBRC 100440) (Methanococcus jannaschii).